Reading from the N-terminus, the 298-residue chain is MATGKEIRGKIKNFESTKKITKAMEMISVSKMRKAQERMRAARPYADKVRNIAANLGQANPEYIHAFMKTNEAPVVGMIVVTTDKGLCGGLNTNVLRSVTNKLRDLQSAGMSAQTVAIGNKGFGFLNRIGAKVVSHVTQLGDKPHLERLIGPVKVLLDAYARGEISAVYLSYTKFINTMKQEVVLEQLLPLSAARMQAETEASETASGAKHGWDYIYEPDAQSVIDDLLVRYVEALVYQSVAENMASEHAARMVAMKAATDNAGNVIGELKLVYNKTRQAAITKELSEIVSGAAAIGA.

It belongs to the ATPase gamma chain family. F-type ATPases have 2 components, CF(1) - the catalytic core - and CF(0) - the membrane proton channel. CF(1) has five subunits: alpha(3), beta(3), gamma(1), delta(1), epsilon(1). CF(0) has three main subunits: a, b and c.

Its subcellular location is the cell inner membrane. In terms of biological role, produces ATP from ADP in the presence of a proton gradient across the membrane. The gamma chain is believed to be important in regulating ATPase activity and the flow of protons through the CF(0) complex. This chain is ATP synthase gamma chain, found in Albidiferax ferrireducens (strain ATCC BAA-621 / DSM 15236 / T118) (Rhodoferax ferrireducens).